The chain runs to 442 residues: Syndecan-3 (442 aa).

Disordered regions lie at residues 1–24 (MKPGPPHRAGAAHGAGAGAGAAAG) and 57–87 (RPVDLEGSGDDDSFPDDELDDLYSGSGSGYF). At 1–387 (MKPGPPHRAG…SILERKEVLV (387 aa)) the chain is on the extracellular side. Gly residues predominate over residues 13–24 (HGAGAGAGAAAG). Positions 63 to 77 (GSGDDDSFPDDELDD) are enriched in acidic residues. O-linked (Xyl...) (glycosaminoglycan) serine glycans are attached at residues serine 80, serine 82, serine 84, and serine 91. Residue serine 108 is glycosylated (O-linked (GalNAc) serine; by GALNT13). 2 O-linked (GalNAc) threonine; by GALNT13 glycosylation sites follow: threonine 109 and threonine 110. Disordered stretches follow at residues 150-173 (EEPSQRATTVSTTMATTAATSTGD), 225-326 (TTPE…ETTQ), and 340-367 (AAKASSPPGTLPKGARPGPGLLDNAIDS). 3 stretches are compositionally biased toward low complexity: residues 156 to 173 (ATTVSTTMATTAATSTGD), 225 to 238 (TTPEAPSPPTTAAV), and 275 to 286 (TLPLGTTAPGPT). The O-linked (GalNAc) serine; by GALNT13 glycan is linked to serine 160. Residues threonine 161, threonine 162, and threonine 169 are each glycosylated (O-linked (GalNAc) threonine; by GALNT13). Serine 170 carries an O-linked (GalNAc) serine; by GALNT13 glycan. Threonine 171 carries O-linked (GalNAc) threonine; by GALNT13 glycosylation. Over residues 288–299 (VAQTPTPETFLT) the composition is skewed to polar residues. O-linked (Xyl...) (glycosaminoglycan) serine glycans are attached at residues serine 314 and serine 367. A helical membrane pass occupies residues 388–408 (AVIVGGVVGALFAAFLVTLLI). Tyrosine 409, tyrosine 419, tyrosine 431, and tyrosine 441 each carry phosphotyrosine. Residues 409-442 (YRMKKKDEGSYTLEEPKQASVTYQKPDKQEEFYA) are Cytoplasmic-facing. A disordered region spans residues 419 to 442 (YTLEEPKQASVTYQKPDKQEEFYA). The span at 433-442 (KPDKQEEFYA) shows a compositional bias: basic and acidic residues.

This sequence belongs to the syndecan proteoglycan family. As to quaternary structure, interacts with TIAM1. Interacts with PTN (via heparan sulfate chains); this interaction mediates the neurite outgrowth-promoting signal from PTN to the cytoskeleton of growing neurites; this interaction mediates osteoblast recruitment. Interacts with MDK; this interaction induces SDC3 clustering; this interaction induces neuronal cell adhesion and neurite outgrowth. O-glycosylated within the Thr/Ser-rich region which could interact with lectin domains on other molecules. As to expression, expressed in the nervous system, the adrenal gland, and the spleen.

It localises to the cell membrane. Cell surface proteoglycan that may bear heparan sulfate. May have a role in the organization of cell shape by affecting the actin cytoskeleton, possibly by transferring signals from the cell surface in a sugar-dependent mechanism. The sequence is that of Syndecan-3 (SDC3) from Homo sapiens (Human).